Here is a 313-residue protein sequence, read N- to C-terminus: tRNA dimethylallyltransferase (313 aa).

Gly10–Thr17 contributes to the ATP binding site. Thr12–Thr17 contacts substrate. Interaction with substrate tRNA stretches follow at residues Asp35 to Met38, Gln159 to Arg163, and Arg240 to Arg245.

The protein belongs to the IPP transferase family. In terms of assembly, monomer. Requires Mg(2+) as cofactor.

It carries out the reaction adenosine(37) in tRNA + dimethylallyl diphosphate = N(6)-dimethylallyladenosine(37) in tRNA + diphosphate. Its function is as follows. Catalyzes the transfer of a dimethylallyl group onto the adenine at position 37 in tRNAs that read codons beginning with uridine, leading to the formation of N6-(dimethylallyl)adenosine (i(6)A). This is tRNA dimethylallyltransferase from Legionella pneumophila (strain Lens).